A 51-amino-acid chain; its full sequence is Large ribosomal subunit protein bL33 (51 aa).

This sequence belongs to the bacterial ribosomal protein bL33 family.

This Acinetobacter baylyi (strain ATCC 33305 / BD413 / ADP1) protein is Large ribosomal subunit protein bL33.